The primary structure comprises 396 residues: Tryptophan synthase beta chain (396 aa).

K88 carries the N6-(pyridoxal phosphate)lysine modification.

Belongs to the TrpB family. Tetramer of two alpha and two beta chains. The cofactor is pyridoxal 5'-phosphate.

The catalysed reaction is (1S,2R)-1-C-(indol-3-yl)glycerol 3-phosphate + L-serine = D-glyceraldehyde 3-phosphate + L-tryptophan + H2O. Its pathway is amino-acid biosynthesis; L-tryptophan biosynthesis; L-tryptophan from chorismate: step 5/5. In terms of biological role, the beta subunit is responsible for the synthesis of L-tryptophan from indole and L-serine. In Actinobacillus pleuropneumoniae serotype 5b (strain L20), this protein is Tryptophan synthase beta chain.